Here is an 888-residue protein sequence, read N- to C-terminus: Bifunctional lysine-specific demethylase and histidyl-hydroxylase NO66 (888 aa).

Disordered stretches follow at residues 83–157, 187–208, and 261–446; these read AAAK…GSFS, SNNS…DSDA, and NSTS…NKLS. The segment covering 98-108 has biased composition (basic and acidic residues); sequence REKNIAKKQPE. Polar residues predominate over residues 116–139; sequence ENVQKQLENGQENNGTLINLSNGK. The span at 192 to 207 shows a compositional bias: acidic residues; sequence FDFDSDGDSNDFDDSD. Basic and acidic residues predominate over residues 273–284; it reads VEPRKAAKRNEP. The span at 392 to 403 shows a compositional bias: low complexity; sequence KNKNNDNNNIDT. Over residues 404-429 the composition is skewed to basic and acidic residues; the sequence is NNKKDANNKKDANNNKDINNKKDANN. Over residues 430-444 the composition is skewed to low complexity; it reads NKDTNNNKDNNNKNK. Positions 564–709 constitute a JmjC domain; it reads CSIRILNPST…NLLEVLMPSV (146 aa). The Fe cation site is built by His610, Asp612, and His675.

The protein belongs to the ROX family. NO66 subfamily. Fe(2+) serves as cofactor.

The protein resides in the nucleus. It carries out the reaction N(6),N(6)-dimethyl-L-lysyl(36)-[histone H3] + 2 2-oxoglutarate + 2 O2 = L-lysyl(36)-[histone H3] + 2 formaldehyde + 2 succinate + 2 CO2. Its function is as follows. Oxygenase that can act as both a histone lysine demethylase and a ribosomal histidine hydroxylase. Specifically demethylates 'Lys-4' (H3K4me) and 'Lys-36' (H3K36me) of histone H3, thereby playing a central role in histone code. In Drosophila mojavensis (Fruit fly), this protein is Bifunctional lysine-specific demethylase and histidyl-hydroxylase NO66.